The sequence spans 2324 residues: Myomegalin (2324 aa).

4 coiled-coil regions span residues 41-132 (REDV…LVEA), 158-205 (QVKL…LLEE), 238-288 (DSHL…SLKE), and 348-638 (LFCS…NKQA). Disordered stretches follow at residues 72–96 (TWAD…EPQQ) and 205–240 (EPGG…SDSH). The segment covering 85–96 (AELRRQVEEPQQ) has biased composition (basic and acidic residues). The span at 219–238 (PTQQKPDLNETPTTQPSVSD) shows a compositional bias: polar residues. A disordered region spans residues 701-747 (PAGATSVGPHHGEQTDQGSTQMPSRDDSTSLTAREEASIPRSTLGDS). Residue threonine 705 is modified to Phosphothreonine. Positions 724–738 (SRDDSTSLTAREEAS) are enriched in basic and acidic residues. Coiled-coil stretches lie at residues 745 to 822 (GDSD…QLVD), 855 to 923 (ENRR…EEVL), and 1011 to 1043 (LRAE…GFSS). 2 disordered regions span residues 1155–1182 (LPSS…SLKL) and 1195–1216 (NKSQ…STKH). Coiled-coil stretches lie at residues 1213–1241 (STKH…SEAT), 1346–1384 (TSDD…LSAT), and 1430–1455 (GLQA…PKTG). Disordered stretches follow at residues 1540–1559 (TDRL…KEEA), 1589–1610 (RFSS…SSTS), 1628–1685 (YTHY…IPKP), 1742–1773 (APPT…SPAR), 1857–1877 (LSST…GLES), and 2081–2140 (NQQP…TPPK). The region spanning 1550–1641 (KDHKSEKEEA…EEKKPSPSNS (92 aa)) is the Olduvai domain. Low complexity-rich tracts occupy residues 1591 to 1610 (SSPP…SSTS) and 1637 to 1646 (SPSNSAASAS). The segment covering 1743–1767 (PPTSTSTLLSNHTEASSPRYSNPAQ) has biased composition (polar residues). Residues 1821 to 2056 (GADLLEEHLG…LRLQLEQQMD (236 aa)) adopt a coiled-coil conformation. 2 stretches are compositionally biased toward polar residues: residues 2081–2090 (NQQPPFQGSA) and 2108–2135 (PSNS…SAAT). Residues 2248 to 2274 (EEGNLMEKELLDLRAQVSQQQQLLQST) are a coiled coil.

As to quaternary structure, interacts with PDE4D. May interact with MAPRE1 and MAPRE3. May form a pericentrosomal complex with AKAP9, CDK5RAP2 and EB1/MAPRE1 in an isoform-specific manner; within this complex, may mediate MAPRE1-binding to CDK5RAP2. Interaction with AKAP9 stabilizes both proteins. May interact with CAMSAP2 in an isoform-specific manner; this interaction is much stronger in the presence of AKAP9. In complex with AKAP9, recruits CAMSAP2 to the Golgi apparatus. May interact with unglycosylated LGALS3BP in an isoform-specific manner; this interaction may connect the pericentrosomal complex to the gamma-tubulin ring complex (gamma-TuRC) to promote microtubule assembly and acetylation. Abundantly expressed in heart and skeletal muscle and to a lower extent in brain, lung and liver. Expressed in heart, skeletal muscle and testis (at protein level).

It localises to the cytoplasm. It is found in the cytoskeleton. Its subcellular location is the microtubule organizing center. The protein resides in the centrosome. The protein localises to the golgi apparatus. In terms of biological role, functions as an anchor sequestering components of the cAMP-dependent pathway to Golgi and/or centrosomes. May participate in microtubule dynamics, promoting microtubule assembly, in an isoform-specific manner. Depending upon the cell context, may act at the level of the Golgi apparatus or that of the centrosome. In complex with AKAP9, recruits CAMSAP2 to the Golgi apparatus and tethers non-centrosomal minus-end microtubules to the Golgi, an important step for polarized cell movement. In complex with AKAP9, EB1/MAPRE1 and CDK5RAP2, contributes to microtubules nucleation and extension from the centrosome to the cell periphery, a crucial process for directed cell migration, mitotic spindle orientation and cell-cycle progression. This is Myomegalin (Pde4dip) from Rattus norvegicus (Rat).